A 169-amino-acid polypeptide reads, in one-letter code: NADH-quinone oxidoreductase subunit B (169 aa).

[4Fe-4S] cluster is bound by residues C42, C43, C107, and C136.

It belongs to the complex I 20 kDa subunit family. In terms of assembly, NDH-1 is composed of 14 different subunits. Subunits NuoB, C, D, E, F, and G constitute the peripheral sector of the complex. The cofactor is [4Fe-4S] cluster.

It is found in the cell inner membrane. It catalyses the reaction a quinone + NADH + 5 H(+)(in) = a quinol + NAD(+) + 4 H(+)(out). Its function is as follows. NDH-1 shuttles electrons from NADH, via FMN and iron-sulfur (Fe-S) centers, to quinones in the respiratory chain. Couples the redox reaction to proton translocation (for every two electrons transferred, four hydrogen ions are translocated across the cytoplasmic membrane), and thus conserves the redox energy in a proton gradient. This is NADH-quinone oxidoreductase subunit B from Campylobacter hominis (strain ATCC BAA-381 / DSM 21671 / CCUG 45161 / LMG 19568 / NCTC 13146 / CH001A).